The primary structure comprises 127 residues: Large ribosomal subunit protein eL8 (127 aa).

This sequence belongs to the eukaryotic ribosomal protein eL8 family. In terms of assembly, part of the 50S ribosomal subunit. Probably part of the RNase P complex.

The protein resides in the cytoplasm. Its function is as follows. Multifunctional RNA-binding protein that recognizes the K-turn motif in ribosomal RNA, the RNA component of RNase P, box H/ACA, box C/D and box C'/D' sRNAs. In Saccharolobus islandicus (strain Y.N.15.51 / Yellowstone #2) (Sulfolobus islandicus), this protein is Large ribosomal subunit protein eL8.